We begin with the raw amino-acid sequence, 616 residues long: MDRAVSQVALENDEREAKNTWRLVFRIAILLSTVVTLAISAAALAYSMEASTPSDLVGIPTAISRAEEKITSALGSNQDVVDRIYKQVALESPLALLNTESTIMNAITSLSYRINGAANSSGCGAPIHDPDYIGGIGKELIVDDASDVTSYYPSAFQEHLNFIPAPTTGSGCTRIPSFDMSATHYCYTHNVILSGCRDHSHSHQYLALGVLRTSATGRVFFSTLRSINLDDTQNRKSCSVSATPLGCDMLCSKVTETEEEDYNSAIPTSMVHGRLGFDGQYHEKDLDVTTLFEDWVANYPGVGGGSFIDNRVWFPVYGGLKPNSPSDTAQEGKYVIYKRYNDTCPDEQDYQIQMAKSSYKPGRFGGKRVQQAILSIKVSTSLGEDPVLTVPPNTVTLMGAEGRVLTVGTSHFLYQRGSSYFSPALLYPMIVSNKTATLHSPYTFNAFTRPGSVPCQASARCPNSCVTGVYTDPYPLVFYRNHTLRGVFGTMLDDKQARLNPVSAVFDSISRSRITRVSSSSTKAAYTTSTCFKVVKTNKTYCLSIAEISNTLFGEFRIVPLLVEILKDDGVREARSSRLSQLREGWKDDIVSPIFCDAKNQTEYRRELESYAASWP.

At Met1–Arg26 the chain is on the intravirion side. Residues Ile27 to Ser47 form a helical membrane-spanning segment. Residues Met48 to Pro616 are Virion surface-facing. An N-linked (GlcNAc...) asparagine; by host glycan is attached at Asn119. The interval Gly124 to Tyr152 is important for interaction with fusion/F protein. 3 cysteine pairs are disulfide-bonded: Cys172–Cys196, Cys186–Cys247, and Cys238–Cys251. The involved in neuraminidase activity stretch occupies residues Asn234–Ser239. Residues Asn341 and Asn433 are each glycosylated (N-linked (GlcNAc...) asparagine; by host). 2 disulfides stabilise this stretch: Cys344–Cys461 and Cys455–Cys465. 3 N-linked (GlcNAc...) asparagine; by host glycosylation sites follow: Asn481, Asn538, and Asn600. Cys531 and Cys542 form a disulfide bridge.

Belongs to the paramyxoviruses hemagglutinin-neuraminidase family. In terms of assembly, homotetramer; composed of disulfide-linked homodimers. Interacts with F protein trimer. Interacts with host CG-1B; this interaction inhibits viral adsorption and replication rather than internalization.

The protein localises to the virion membrane. It is found in the host cell membrane. The catalysed reaction is Hydrolysis of alpha-(2-&gt;3)-, alpha-(2-&gt;6)-, alpha-(2-&gt;8)- glycosidic linkages of terminal sialic acid residues in oligosaccharides, glycoproteins, glycolipids, colominic acid and synthetic substrates.. Functionally, mediates the viral entry into the host cell together with fusion/F protein. Attaches the virus to sialic acid-containing cell receptors and thereby initiates infection. Binding of HN protein to the receptor induces a conformational change that allows the F protein to trigger virion/cell membranes fusion. Its function is as follows. Neuraminidase activity ensures the efficient spread of the virus by dissociating the mature virions from the neuraminic acid containing glycoproteins. The chain is Hemagglutinin-neuraminidase (HN) from Newcastle disease virus (strain Queensland/66) (NDV).